The sequence spans 493 residues: 3-octaprenyl-4-hydroxybenzoate carboxy-lyase (493 aa).

Mn(2+) is bound at residue asparagine 172. Prenylated FMN is bound by residues 175–177 (IYR), 189–191 (RWL), and 194–195 (RG). Glutamate 238 contributes to the Mn(2+) binding site. Aspartate 287 serves as the catalytic Proton donor.

Belongs to the UbiD family. In terms of assembly, homohexamer. Prenylated FMN is required as a cofactor. Mn(2+) serves as cofactor.

The protein resides in the cell membrane. The catalysed reaction is a 4-hydroxy-3-(all-trans-polyprenyl)benzoate + H(+) = a 2-(all-trans-polyprenyl)phenol + CO2. It functions in the pathway cofactor biosynthesis; ubiquinone biosynthesis. In terms of biological role, catalyzes the decarboxylation of 3-octaprenyl-4-hydroxy benzoate to 2-octaprenylphenol, an intermediate step in ubiquinone biosynthesis. This is 3-octaprenyl-4-hydroxybenzoate carboxy-lyase from Shewanella amazonensis (strain ATCC BAA-1098 / SB2B).